The chain runs to 459 residues: Vanillin aminotransferase (459 aa).

Pyridoxal 5'-phosphate contacts are provided by residues 115–116 (GS) and aspartate 255. Lysine 284 bears the N6-(pyridoxal phosphate)lysine mark. 320 to 321 (FT) is a pyridoxal 5'-phosphate binding site. Residues 428 to 459 (LSLEELDELIRIYGKALKDTEKRVEELKSQKK) adopt a coiled-coil conformation.

This sequence belongs to the class-III pyridoxal-phosphate-dependent aminotransferase family. Expressed in placental tissue of immature fruit.

It catalyses the reaction vanillin + L-alanine = vanillylamine + pyruvate. Its function is as follows. Involved in the biosynthesis of capsaicinoids natural products, pungent alkaloids synthesized from phenylpropanoid intermediates in the placental tissue of chili pepper fruit acting as repellant on herbivorous mammals and conferring spiciness to hot peppers. Can transfer an amine from alanine to vanillin, forming vanillylamine and pyruvate. This is Vanillin aminotransferase from Capsicum frutescens (Cayenne pepper).